Here is a 250-residue protein sequence, read N- to C-terminus: Probable transcriptional regulatory protein Mkms_2298 (250 aa).

It belongs to the TACO1 family.

The protein resides in the cytoplasm. The protein is Probable transcriptional regulatory protein Mkms_2298 of Mycobacterium sp. (strain KMS).